The primary structure comprises 396 residues: Elongation factor Tu (396 aa).

In terms of domain architecture, tr-type G spans Lys-10–Glu-206. A G1 region spans residues Gly-19–Thr-26. Gly-19 to Thr-26 lines the GTP pocket. Residue Thr-26 participates in Mg(2+) binding. The G2 stretch occupies residues Gly-60–Ala-64. The interval Asp-81–Gly-84 is G3. GTP is bound by residues Asp-81–His-85 and Asn-136–Asp-139. The G4 stretch occupies residues Asn-136–Asp-139. The segment at Ser-174–Leu-176 is G5.

Belongs to the TRAFAC class translation factor GTPase superfamily. Classic translation factor GTPase family. EF-Tu/EF-1A subfamily. Monomer.

It localises to the cytoplasm. It catalyses the reaction GTP + H2O = GDP + phosphate + H(+). Its function is as follows. GTP hydrolase that promotes the GTP-dependent binding of aminoacyl-tRNA to the A-site of ribosomes during protein biosynthesis. The chain is Elongation factor Tu from Methylococcus capsulatus (strain ATCC 33009 / NCIMB 11132 / Bath).